The chain runs to 548 residues: Protein GPR108 (548 aa).

Positions 1 to 32 (MAVSERRGLGRGSPAEWGPWLLLLLLLGGSSG) are cleaved as a signal peptide. N-linked (GlcNAc...) asparagine glycosylation is found at Asn57, Asn63, and Asn109. The tract at residues 165–190 (DHAGTTAAPDKAKSKPTGLQGDRQGV) is disordered. N-linked (GlcNAc...) asparagine glycans are attached at residues Asn205 and Asn209. 7 consecutive transmembrane segments (helical) span residues 268–288 (LYMV…SILC), 297–317 (IHWL…FHSI), 341–361 (LLKG…WAFV), 372–392 (IFGI…VMES), 406–426 (ILFL…VWSI), 454–474 (VMVI…RAVV), and 478–498 (WQWL…VLTG). Asn539 carries an N-linked (GlcNAc...) asparagine glycan.

Belongs to the LU7TM family.

Its subcellular location is the golgi apparatus. It localises to the cis-Golgi network membrane. The protein resides in the trans-Golgi network membrane. The protein localises to the golgi apparatus membrane. May play a role in intracellular immune modulation by activating NF-kappaB response and attenuating Toll-like-receptor response. The chain is Protein GPR108 (GPR108) from Bos taurus (Bovine).